The sequence spans 86 residues: DNA-directed RNA polymerase subunit Rpo6 (86 aa).

The protein belongs to the archaeal Rpo6/eukaryotic RPB6 RNA polymerase subunit family. As to quaternary structure, part of the RNA polymerase complex.

It is found in the cytoplasm. The catalysed reaction is RNA(n) + a ribonucleoside 5'-triphosphate = RNA(n+1) + diphosphate. Functionally, DNA-dependent RNA polymerase (RNAP) catalyzes the transcription of DNA into RNA using the four ribonucleoside triphosphates as substrates. The sequence is that of DNA-directed RNA polymerase subunit Rpo6 from Sulfurisphaera tokodaii (strain DSM 16993 / JCM 10545 / NBRC 100140 / 7) (Sulfolobus tokodaii).